We begin with the raw amino-acid sequence, 243 residues long: Carboxy-S-adenosyl-L-methionine synthase (243 aa).

Residues Tyr35, 68-70 (GCS), 92-93 (DN), and Arg199 each bind S-adenosyl-L-methionine.

This sequence belongs to the class I-like SAM-binding methyltransferase superfamily. Cx-SAM synthase family. In terms of assembly, homodimer.

The catalysed reaction is prephenate + S-adenosyl-L-methionine = carboxy-S-adenosyl-L-methionine + 3-phenylpyruvate + H2O. Catalyzes the conversion of S-adenosyl-L-methionine (SAM) to carboxy-S-adenosyl-L-methionine (Cx-SAM). The chain is Carboxy-S-adenosyl-L-methionine synthase from Helicobacter pylori (strain ATCC 700392 / 26695) (Campylobacter pylori).